Here is an 883-residue protein sequence, read N- to C-terminus: Mitogen-activated protein kinase kinase kinase YODA (883 aa).

Disordered stretches follow at residues 28–193, 303–364, and 376–396; these read GFAS…AEMF, CSPE…PPLL, and SAAT…TVSP. The segment covering 57–72 has biased composition (low complexity); the sequence is SRLPSRSPSPSTRVSR. Residues 94 to 105 show a composition bias toward polar residues; that stretch reads VTSTDSGMNGSQ. Residues 143–165 show a composition bias toward low complexity; that stretch reads SVSSGSSVGDIPSDSLLSPLASD. Polar residues-rich tracts occupy residues 167-189 and 314-328; these read ENGN…NKNS and RMTS…QSGA. A Protein kinase domain is found at 400 to 656; that stretch reads WKKGRLLGMG…AAQLLDHAFV (257 aa). Residues 406 to 414 and Lys-429 each bind ATP; that span reads LGMGSFGHV. The active-site Proton acceptor is the Asp-525. Disordered stretches follow at residues 712–773 and 787–838; these read GSGF…GAIP and EGIG…IQPG. The segment covering 733 to 756 has biased composition (low complexity); it reads SPIFHSHSPHISGRRSPSPISSPH.

The protein belongs to the protein kinase superfamily. STE Ser/Thr protein kinase family. MAP kinase kinase kinase subfamily. In terms of assembly, interacts with ASK7. Interacts with BSK12/SSP. Binds to BASL and MPK6. In terms of tissue distribution, expressed in roots, leaves, guard cells, stems, flowers and siliques.

It is found in the cytoplasm. It localises to the cell cortex. The protein resides in the cell membrane. The enzyme catalyses L-seryl-[protein] + ATP = O-phospho-L-seryl-[protein] + ADP + H(+). It carries out the reaction L-threonyl-[protein] + ATP = O-phospho-L-threonyl-[protein] + ADP + H(+). Its activity is regulated as follows. Contains an N-terminal autoinhibitory domain. In terms of biological role, functions in a MAP kinase cascade that acts as a molecular switch to regulate the first cell fate decisions in the zygote and the early embryo. Promotes elongation of the zygote and development of its basal daughter cell into the extra-embryonic suspensor. In stomatal development, acts downstream of the LRR receptor TMM, but upstream of the MKK4/MKK5-MPK3/MPK6 module to regulate stomatal cell fate before the guard mother cell (GMC) is specified. Plays a central role in both guard cell identity and pattern formation. This MAPK cascade also functions downstream of the ER receptor in regulating coordinated local cell proliferation, which shapes the morphology of plant organs. Upon brassinosteroid signaling, is inhibited by phosphorylation of its auto-inhibitory N-terminal domain by the GSK3-like kinase ASK7. This chain is Mitogen-activated protein kinase kinase kinase YODA, found in Arabidopsis thaliana (Mouse-ear cress).